A 69-amino-acid polypeptide reads, in one-letter code: Large ribosomal subunit protein uL29 (69 aa).

It belongs to the universal ribosomal protein uL29 family.

This chain is Large ribosomal subunit protein uL29, found in Mycoplasmopsis agalactiae (strain NCTC 10123 / CIP 59.7 / PG2) (Mycoplasma agalactiae).